Reading from the N-terminus, the 228-residue chain is Urease accessory protein UreE (228 aa).

The interval 188-228 (PLDEPHGSGLHIHAIHSHGDGHSHDHDHSHSHGDHDHDHKH) is disordered. A compositionally biased stretch (basic and acidic residues) spans 204 to 228 (SHGDGHSHDHDHSHSHGDHDHDHKH).

This sequence belongs to the UreE family.

The protein resides in the cytoplasm. In terms of biological role, involved in urease metallocenter assembly. Binds nickel. Probably functions as a nickel donor during metallocenter assembly. The sequence is that of Urease accessory protein UreE from Yersinia kristensenii.